Consider the following 341-residue polypeptide: 4-hydroxy-2-oxovalerate aldolase (341 aa).

A Pyruvate carboxyltransferase domain is found at 9-259 (VRITEVCLRD…KLDIDLYKMM (251 aa)). Residue 17 to 18 (RD) participates in substrate binding. Asp18 lines the Mn(2+) pocket. Catalysis depends on His21, which acts as the Proton acceptor. Ser171 and His198 together coordinate substrate. Residues His198 and His200 each contribute to the Mn(2+) site. A substrate-binding site is contributed by Tyr289.

This sequence belongs to the 4-hydroxy-2-oxovalerate aldolase family.

The catalysed reaction is (S)-4-hydroxy-2-oxopentanoate = acetaldehyde + pyruvate. The polypeptide is 4-hydroxy-2-oxovalerate aldolase (Bacillus cereus (strain ATCC 10987 / NRS 248)).